Consider the following 166-residue polypeptide: Putative peptidyl-prolyl cis-trans isomerase dodo (166 aa).

Residues 5-39 (EQLPDGWEKRTSRSTGMSYYLNMYTKESQWDQPTE) form the WW domain. The disordered stretch occupies residues 32-53 (SQWDQPTEPAKKAGGGSAGGGD). Positions 44–53 (AGGGSAGGGD) are enriched in gly residues. Residues 55-166 (PDEVHCLHLL…SGLHIILRKA (112 aa)) enclose the PpiC domain.

The enzyme catalyses [protein]-peptidylproline (omega=180) = [protein]-peptidylproline (omega=0). The protein is Putative peptidyl-prolyl cis-trans isomerase dodo (dod) of Drosophila melanogaster (Fruit fly).